A 121-amino-acid chain; its full sequence is Large ribosomal subunit protein uL14 (121 aa).

This sequence belongs to the universal ribosomal protein uL14 family. In terms of assembly, part of the 50S ribosomal subunit. Forms a cluster with proteins L3 and L19. In the 70S ribosome, L14 and L19 interact and together make contacts with the 16S rRNA in bridges B5 and B8.

In terms of biological role, binds to 23S rRNA. Forms part of two intersubunit bridges in the 70S ribosome. This chain is Large ribosomal subunit protein uL14, found in Legionella pneumophila (strain Corby).